The following is a 192-amino-acid chain: Flavin prenyltransferase UbiX (192 aa).

Residues 10–12 (GAS), Ser36, 92–95 (SVAT), and Arg127 each bind FMN. Dimethylallyl phosphate-binding residues include Tyr157 and Lys173.

The protein belongs to the UbiX/PAD1 family.

The enzyme catalyses dimethylallyl phosphate + FMNH2 = prenylated FMNH2 + phosphate. Flavin prenyltransferase that catalyzes the synthesis of the prenylated FMN cofactor (prenyl-FMN) for 4-hydroxy-3-polyprenylbenzoic acid decarboxylase UbiD. The prenyltransferase is metal-independent and links a dimethylallyl moiety from dimethylallyl monophosphate (DMAP) to the flavin N5 and C6 atoms of FMN. The chain is Flavin prenyltransferase UbiX from Chlamydia trachomatis serovar D (strain ATCC VR-885 / DSM 19411 / UW-3/Cx).